A 295-amino-acid chain; its full sequence is Golgi-associated RAB2 interactor protein 1A (295 aa).

A disordered region spans residues 187-206 (MPNSSTETTPESSRPASSQS). A compositionally biased stretch (low complexity) spans 190 to 206 (SSTETTPESSRPASSQS). Ser-220, Ser-221, Ser-251, and Ser-255 each carry phosphoserine.

It belongs to the GARIN family. Interacts (via N-terminus) with RAB2B (in GTP-bound form).

The protein resides in the golgi apparatus. RAB2B effector protein required for accurate acrosome formation and normal male fertility. This is Golgi-associated RAB2 interactor protein 1A (Garin1a) from Rattus norvegicus (Rat).